The sequence spans 298 residues: Inosose dehydratase (298 aa).

Belongs to the IolE/MocC family. The cofactor is glutathione. Co(2+) serves as cofactor. Requires Mn(2+) as cofactor.

The catalysed reaction is scyllo-inosose = 3D-3,5/4-trihydroxycyclohexane-1,2-dione + H2O. The protein operates within polyol metabolism; myo-inositol degradation into acetyl-CoA; acetyl-CoA from myo-inositol: step 2/7. Functionally, catalyzes the dehydration of inosose (2-keto-myo-inositol, 2KMI or 2,4,6/3,5-pentahydroxycyclohexanone) to 3D-(3,5/4)-trihydroxycyclohexane-1,2-dione (D-2,3-diketo-4-deoxy-epi-inositol). In Bacillus velezensis (strain DSM 23117 / BGSC 10A6 / LMG 26770 / FZB42) (Bacillus amyloliquefaciens subsp. plantarum), this protein is Inosose dehydratase.